Here is a 245-residue protein sequence, read N- to C-terminus: MQTNRFEHPLNEKVRIYLRLEYLIRQMTHASQLSDQWQHQIFFRALFDLLEILDQVQLKTELAKDLEKQRCKLKNWLNIDGVDQNALLELLDSMDMAHHKLIAANRLGQDLRDDRFLSGIKQRFSIPGGSCCFDLPTLHHWLHLPLAHKQNDLSTWLSQLTEMTDALNLWLRFTRESGPFQPQIARAGFFQHTAEDASLLRLQICPSYGVYPMISGHRGRFAIRFIPFEEGATIADTIEFKLAIC.

Belongs to the ZapD family. As to quaternary structure, interacts with FtsZ.

Its subcellular location is the cytoplasm. Cell division factor that enhances FtsZ-ring assembly. Directly interacts with FtsZ and promotes bundling of FtsZ protofilaments, with a reduction in FtsZ GTPase activity. This Photobacterium profundum (strain SS9) protein is Cell division protein ZapD.